A 114-amino-acid polypeptide reads, in one-letter code: Eukaryotic translation initiation factor 6 (114 aa).

This sequence belongs to the eIF-6 family. As to quaternary structure, monomer. Associates with the 60S ribosomal subunit.

Its subcellular location is the cytoplasm. It localises to the nucleus. The protein resides in the nucleolus. Functionally, binds to the 60S ribosomal subunit and prevents its association with the 40S ribosomal subunit to form the 80S initiation complex in the cytoplasm. May also be involved in ribosome biogenesis. The protein is Eukaryotic translation initiation factor 6 of Trypanosoma cruzi.